The sequence spans 767 residues: Slo-interacting protein 1 (767 aa).

The 79-residue stretch at 202 to 280 folds into the PDZ domain; that stretch reads QQSSTDTNKG…SVTLLVSRIL (79 aa). 2 disordered regions span residues 521–557 and 744–767; these read GNAAAPGEEVDNSSSAYNTGDSNNSASPHQNTTNPDE and KEERKRHIERAREKRHHQTQQQQQ. Residues 532 to 555 show a composition bias toward polar residues; sequence NSSSAYNTGDSNNSASPHQNTTNP. Residues 744-755 are compositionally biased toward basic and acidic residues; it reads KEERKRHIERAR.

As to quaternary structure, interacts with Slo. As to expression, in embryos, it is expressed throughout the CNS and in several peripheral locations. Colocalizes with Slo.

May selectively reduce calcium-activated potassium channel (Slo) currents by reducing the number of Slo channels in the plasma membrane. This chain is Slo-interacting protein 1 (Slip1), found in Drosophila melanogaster (Fruit fly).